Consider the following 2203-residue polypeptide: Voltage-dependent L-type calcium channel subunit alpha-1D (2203 aa).

2 disordered regions span residues 1–51 and 64–100; these read MMMM…QTVL and KAAQTMSTSAPPPVGSLSQRKRQQYAKSKKQGNSSNS. Residues 1-126 lie on the Cytoplasmic side of the membrane; the sequence is MMMMMMMKKM…RACISIVDWK (126 aa). Residues 38–51 show a composition bias toward polar residues; it reads GPTSQPNSSKQTVL. The segment covering 82–93 has biased composition (basic residues); the sequence is QRKRQQYAKSKK. Residues 112-408 form an I repeat; the sequence is NNPIRRACIS…NLVLGVLSGE (297 aa). A helical transmembrane segment spans residues 127-145; the sequence is PFDIFILLAIFANCVALAI. Over 146–163 the chain is Extracellular; sequence YIPFPEDDSNSTNHNLEK. Asparagine 155 is a glycosylation site (N-linked (GlcNAc...) asparagine). A helical membrane pass occupies residues 164-183; it reads VEYAFLIIFTVETFLKIIAS. The Cytoplasmic portion of the chain corresponds to 184-195; it reads GLLLHPNASVRN. A helical membrane pass occupies residues 196–214; that stretch reads GWNLLDFVIVIVGLFSVIL. Over 215–235 the chain is Extracellular; the sequence is EQLTKETEGGNHSSGKSGGFD. A glycan (N-linked (GlcNAc...) asparagine) is linked at asparagine 225. The helical transmembrane segment at 236–254 threads the bilayer; that stretch reads VKALRAFRVLRPLRLVSGV. Topologically, residues 255 to 273 are cytoplasmic; it reads PSLQVVLNSIIKAMVPLLH. The chain crosses the membrane as a helical span at residues 274 to 293; it reads IALLVLFVIIIYAIIGLELF. The Extracellular portion of the chain corresponds to 294 to 381; it reads IGKMHKTCFF…WVNDAIGWEW (88 aa). Residue asparagine 329 is glycosylated (N-linked (GlcNAc...) asparagine). Residue glutamate 364 coordinates Ca(2+). The helical transmembrane segment at 382-406 threads the bilayer; it reads PWVYFVSLIILGSFFVLNLVLGVLS. Topologically, residues 407–582 are cytoplasmic; sequence GEFSKEREKA…RRCRAAVKSV (176 aa). Positions 429 to 446 are binding to the beta subunit; sequence QQLEEDLKGYLDWITQAE. Residues 449-480 form a disordered region; sequence DPENEEEGGEEGKRNTSMPTSETESVNTENVS. Over residues 463 to 479 the composition is skewed to polar residues; sequence NTSMPTSETESVNTENV. The II repeat unit spans residues 528-774; the sequence is EALCVCRCSL…DWNAVMYDGI (247 aa). A helical transmembrane segment spans residues 583–602; sequence TFYWLVIVLVFLNTLTISSE. Residues 603-617 lie on the Extracellular side of the membrane; it reads HYNQPDWLTQIQDIA. Residues 618–636 form a helical membrane-spanning segment; the sequence is NKVLLALFTCEMLVKMYSL. The Cytoplasmic segment spans residues 637–644; it reads GLQAYFVS. A helical membrane pass occupies residues 645 to 663; it reads LFNRFDCFVVCGGITETIL. Over 664 to 673 the chain is Extracellular; sequence VELELMSPLG. A helical membrane pass occupies residues 674 to 692; that stretch reads VSVFRCVRLLRIFKVTRHW. Residues 693–711 are Cytoplasmic-facing; sequence TSLSNLVASLLNSMKSIAS. The helical transmembrane segment at 712 to 732 threads the bilayer; it reads LLLLLFLFIIIFSLLGMQLFG. Topologically, residues 733 to 786 are extracellular; the sequence is GKFNFDETQTKRSTFDNFPQALLTVFQILTGEDWNAVMYDGIMAYGGPSSSGMI. Glutamate 764 contacts Ca(2+). Residues 787-811 form a helical membrane-spanning segment; that stretch reads VCIYFIILFICGNYILLKLFLAIAV. The Cytoplasmic portion of the chain corresponds to 812–945; that stretch reads DNLADAESLN…VGCHKLINHH (134 aa). The interval 822–909 is disordered; it reads TAQKEEAEEK…AGPRPRRISE (88 aa). Over residues 824-849 the composition is skewed to basic and acidic residues; it reads QKEEAEEKERKKIARKESLENKKNNK. The span at 850–861 shows a compositional bias: polar residues; it reads PEVNQIANSDNK. The span at 884 to 897 shows a compositional bias: acidic residues; that stretch reads VGEEEEEEEEDEPE. The III repeat unit spans residues 892–1174; the sequence is EEDEPEVPAG…LLYKAIDSNG (283 aa). Residues 946–964 form a helical membrane-spanning segment; that stretch reads IFTNLILVFIMLSSAALAA. Topologically, residues 965–980 are extracellular; the sequence is EDPIRSHSFRNTILGY. A helical transmembrane segment spans residues 981–1000; the sequence is FDYAFTAIFTVEILLKMTTF. The Cytoplasmic portion of the chain corresponds to 1001–1012; that stretch reads GAFLHKGAFCRN. The chain crosses the membrane as a helical span at residues 1013–1031; it reads YFNLLDMLVVGVSLVSFGI. Residues 1032–1037 lie on the Extracellular side of the membrane; that stretch reads QSSAIS. Residues 1038-1057 traverse the membrane as a helical segment; that stretch reads VVKILRVLRVLRPLRAINRA. Topologically, residues 1058 to 1076 are cytoplasmic; sequence KGLKHVVQCVFVAIRTIGN. The chain crosses the membrane as a helical span at residues 1077 to 1096; that stretch reads IMIVTTLLQFMFACIGVQLF. Residues 1097-1186 lie on the Extracellular side of the membrane; the sequence is KGKFYRCTDE…VGPVYNYRVE (90 aa). Residues 1134 to 1224 form a dihydropyridine binding region; sequence RIWQNSDFNF…QEQGEKEYKN (91 aa). Ca(2+) is bound at residue glutamate 1160. Residues 1187 to 1207 form a helical membrane-spanning segment; the sequence is ISIFFIIYIIIVAFFMMNIFV. Residues 1208 to 1264 are Cytoplasmic-facing; it reads GFVIVTFQEQGEKEYKNCELDKNQRQCVEYALKARPLRRYIPKNPYQYKFWYVVNSS. The stretch at 1211–1486 is one IV repeat; it reads IVTFQEQGEK…YTCGSNFAIV (276 aa). Residues 1265–1283 form a helical membrane-spanning segment; that stretch reads PFEYMMFVLIMLNTLCLAM. Over 1284–1298 the chain is Extracellular; that stretch reads QHYEQSKMFNDAMDI. A helical membrane pass occupies residues 1299–1318; that stretch reads LNMVFTGVFTVEMVLKVIAF. Topologically, residues 1319–1325 are cytoplasmic; the sequence is KPKGYFS. The helical transmembrane segment at 1326-1347 threads the bilayer; the sequence is DAWNTFDSLIVIGSIIDVALSE. Over 1348 to 1357 the chain is Extracellular; it reads ADNSEESNRI. The helical transmembrane segment at 1358 to 1377 threads the bilayer; that stretch reads SITFFRLFRVMRLVKLLSRG. At 1378–1396 the chain is on the cytoplasmic side; that stretch reads EGIRTLLWTFIKSFQALPY. A helical membrane pass occupies residues 1397-1416; it reads VALLIAMLFFIYAVIGMQMF. The Extracellular segment spans residues 1417-1483; the sequence is GKVAMRDNNQ…GEEYTCGSNF (67 aa). A dihydropyridine binding region spans residues 1464–1530; it reads LCDPDSDYNP…LGPHHLDEFK (67 aa). The interval 1476 to 1519 is phenylalkylamine binding; that stretch reads EYTCGSNFAIVYFISFYMLCAFLIINLFVAVIMDNFDYLTRDWS. Residues 1484-1508 traverse the membrane as a helical segment; the sequence is AIVYFISFYMLCAFLIINLFVAVIM. Residues 1509–2203 are Cytoplasmic-facing; sequence DNFDYLTRDW…ADEMICITTL (695 aa). 4 disordered regions span residues 1734 to 1766, 1795 to 1816, 1920 to 1963, and 2176 to 2195; these read NHVNSDRRESLQQTNTTHRPLHVQRPSIPPASD, TSTNANLNNANMSKAAHGKRPS, FERP…HRRS, and GPGYSDEEPDPGREEEDLAD. Residues 1795–1806 are compositionally biased toward polar residues; the sequence is TSTNANLNNANM. Positions 2180 to 2195 are enriched in acidic residues; it reads SDEEPDPGREEEDLAD.

Belongs to the calcium channel alpha-1 subunit (TC 1.A.1.11) family. CACNA1D subfamily. In terms of assembly, voltage-dependent calcium channels are multisubunit complexes, consisting of alpha-1, alpha-2, beta and delta subunits in a 1:1:1:1 ratio. The channel activity is directed by the pore-forming and voltage-sensitive alpha-1 subunit. In many cases, this subunit is sufficient to generate voltage-sensitive calcium channel activity. The auxiliary subunits beta and alpha-2/delta linked by a disulfide bridge regulate the channel activity. Interacts with CABP1 and CABP4, resulting in a near elimination of calcium-dependent inactivation of the channel. Interacts with RIMBP2. In terms of tissue distribution, expressed in brain, pancreatic islets and B-lymphocytes.

It localises to the membrane. The enzyme catalyses Ca(2+)(in) = Ca(2+)(out). Its function is as follows. Voltage-sensitive calcium channels (VSCC) mediate the entry of calcium ions into excitable cells and are also involved in a variety of calcium-dependent processes, including muscle contraction, hormone or neurotransmitter release, gene expression, cell motility, cell division and cell death. The isoform alpha-1D gives rise to L-type calcium currents. Long-lasting (L-type) calcium channels belong to the 'high-voltage activated' (HVA) group. They are blocked by dihydropyridines (DHP), phenylalkylamines, and by benzothiazepines. Functionally, voltage-sensitive calcium channels (VSCC) mediate the entry of calcium ions into excitable cells and are also involved in a variety of calcium-dependent processes, including muscle contraction, hormone or neurotransmitter release, gene expression, cell motility, cell division and cell death. The isoform alpha-1D gives rise to L-type calcium currents. This Rattus norvegicus (Rat) protein is Voltage-dependent L-type calcium channel subunit alpha-1D (Cacna1d).